The chain runs to 239 residues: 2',3'-cyclic-nucleotide 3'-phosphodiesterase (239 aa).

Residues His-39 and His-150 each act as proton donor/acceptor in the active site.

The protein belongs to the 2H phosphoesterase superfamily. CPD1 family.

The protein localises to the golgi apparatus. The catalysed reaction is ADP-alpha-D-ribose 1'',2''-cyclic phosphate + H2O = ADP-alpha-D-ribose 1''-phosphate + H(+). The enzyme catalyses 2',3'-cyclophospho-AMP + H2O = adenosine 2'-phosphate + H(+). It catalyses the reaction 2',3'-cyclophospho-GMP + H2O = guanosine 2'-phosphate + H(+). It carries out the reaction 2',3'-cyclophospho-UMP + H2O = uridine 2'-phosphate + H(+). The catalysed reaction is 2',3'-cyclophospho-CMP + H2O = cytidine 2'-phosphate + H(+). The enzyme catalyses a nucleoside 2',3'-cyclic phosphate + H2O = a nucleoside 2'-phosphate + H(+). In terms of biological role, involved in the metabolism of ADP-ribose 1',2'-cyclic phosphate which is produced as a consequence of tRNA splicing. The protein is 2',3'-cyclic-nucleotide 3'-phosphodiesterase of Saccharomyces cerevisiae (strain ATCC 204508 / S288c) (Baker's yeast).